Here is a 469-residue protein sequence, read N- to C-terminus: MSKKYDAGVKEYRDTYWTPDYIPLDTDLLACFKCTGQEGVPREEVAAAVAAESSTGTWSTVWSELLTDLEFYKGRCYRIEEVPGDKESFYAFIAYPLDLFEEGSVTNVLTSLVGNVFGFKALRHLRLEDIRFPLAFIKTCGGPPNGIQVERDRMNKYGRPLLGCTIKPKLGLSGKNYGRVVYECLRGGLDFTKDDENINSQPFQRWQNRFEFVAEAVKTAEQETGERKGHYLNCTANTPEEMYERAEFAKELGQPIIMHDYITGGFTANTGLARWCRKNGILLHIHRAMHAVIDRHPKHGIHFRVLAKCLRLSGGDQLHTGTVVGKLEGDRQTTLGYIDQLRESFVPEDRTRGNFFDQDWASMPGVFAVASGGIHVWHMPALVAIFGDDSVLQFGGGTHGHPWGSAAGAAANRVALEACVKARNAGREIEKESRDILLEAAKHSPELAIALETWKEIKFEFDTVDKLDV.

Substrate contacts are provided by asparagine 115 and threonine 165. The active-site Proton acceptor is lysine 167. Lysine 169 contacts substrate. Mg(2+)-binding residues include lysine 193, aspartate 195, and glutamate 196. Lysine 193 is modified (N6-carboxylysine). Histidine 286 (proton acceptor) is an active-site residue. The substrate site is built by arginine 287, histidine 319, and serine 371.

This sequence belongs to the RuBisCO large chain family. Type I subfamily. As to quaternary structure, heterohexadecamer of 8 large chains and 8 small chains. Requires Mg(2+) as cofactor.

Its subcellular location is the plastid. It is found in the organellar chromatophore. It catalyses the reaction 2 (2R)-3-phosphoglycerate + 2 H(+) = D-ribulose 1,5-bisphosphate + CO2 + H2O. The enzyme catalyses D-ribulose 1,5-bisphosphate + O2 = 2-phosphoglycolate + (2R)-3-phosphoglycerate + 2 H(+). In terms of biological role, ruBisCO catalyzes two reactions: the carboxylation of D-ribulose 1,5-bisphosphate, the primary event in carbon dioxide fixation, as well as the oxidative fragmentation of the pentose substrate. Both reactions occur simultaneously and in competition at the same active site. This chain is Ribulose bisphosphate carboxylase large chain, found in Paulinella chromatophora.